Reading from the N-terminus, the 270-residue chain is 5'-AMP-activated protein kinase subunit beta-1 (270 aa).

Positions 1-44 (MGNTSSERAALDRQGGHKTPRRDSSGGSKDGDRPKILMDSPEDA) are disordered. Glycine 2 carries the N-myristoyl glycine lipid modification. Phosphothreonine is present on threonine 4. Serine 5 and serine 6 each carry phosphoserine. Positions 9–36 (AALDRQGGHKTPRRDSSGGSKDGDRPKI) are enriched in basic and acidic residues. The residue at position 19 (threonine 19) is a Phosphothreonine. A phosphoserine; by autocatalysis mark is found at serine 24 and serine 25. Serine 40, serine 96, and serine 101 each carry phosphoserine. The segment at 68–163 (EVNDKAPAQA…QVKKTDFEVF (96 aa)) is glycogen-binding domain. The residue at position 108 (serine 108) is a Phosphoserine; by autocatalysis. The residue at position 148 (threonine 148) is a Phosphothreonine. At serine 182 the chain carries Phosphoserine. Lysine 201 is subject to N6-succinyllysine.

It belongs to the 5'-AMP-activated protein kinase beta subunit family. As to quaternary structure, AMPK is a heterotrimer of an alpha catalytic subunit (PRKAA1 or PRKAA2), a beta (PRKAB1 or PRKAB2) and a gamma non-catalytic subunits (PRKAG1, PRKAG2 or PRKAG3). Interacts with FNIP1 and FNIP2. Post-translationally, phosphorylated when associated with the catalytic subunit (PRKAA1 or PRKAA2). Phosphorylated by ULK1; leading to negatively regulate AMPK activity and suggesting the existence of a regulatory feedback loop between ULK1 and AMPK.

Its function is as follows. Non-catalytic subunit of AMP-activated protein kinase (AMPK), an energy sensor protein kinase that plays a key role in regulating cellular energy metabolism. In response to reduction of intracellular ATP levels, AMPK activates energy-producing pathways and inhibits energy-consuming processes: inhibits protein, carbohydrate and lipid biosynthesis, as well as cell growth and proliferation. AMPK acts via direct phosphorylation of metabolic enzymes, and by longer-term effects via phosphorylation of transcription regulators. Also acts as a regulator of cellular polarity by remodeling the actin cytoskeleton; probably by indirectly activating myosin. Beta non-catalytic subunit acts as a scaffold on which the AMPK complex assembles, via its C-terminus that bridges alpha (PRKAA1 or PRKAA2) and gamma subunits (PRKAG1, PRKAG2 or PRKAG3). This Bos taurus (Bovine) protein is 5'-AMP-activated protein kinase subunit beta-1 (PRKAB1).